Here is a 157-residue protein sequence, read N- to C-terminus: uncharacterized protein (157 aa).

To E.coli YcjD and H.influenzae HI_0925.

This is an uncharacterized protein from Haemophilus influenzae (strain ATCC 51907 / DSM 11121 / KW20 / Rd).